We begin with the raw amino-acid sequence, 300 residues long: Protoheme IX farnesyltransferase (300 aa).

The next 8 membrane-spanning stretches (helical) occupy residues 24–44 (VTQLAVFCAVIGMFLATPGMV), 46–66 (WHVLIGGTIGIWLLAGAAFAI), 94–114 (PQILLFSAVLGSVGAWTLYTF), 118–138 (LTMWLTIATFVGYAVVYTLLL), 146–166 (IVIGGASGAMPPALGWAAVTG), 172–192 (AWILVLIIFVWTPPHFWVLAL), 224–244 (VILFAVTLMPFISGMSGVVYL), and 278–298 (IVYLSLLFAALLVDHYARPLL).

The protein belongs to the UbiA prenyltransferase family. Protoheme IX farnesyltransferase subfamily.

It localises to the cell inner membrane. The catalysed reaction is heme b + (2E,6E)-farnesyl diphosphate + H2O = Fe(II)-heme o + diphosphate. It participates in porphyrin-containing compound metabolism; heme O biosynthesis; heme O from protoheme: step 1/1. In terms of biological role, converts heme B (protoheme IX) to heme O by substitution of the vinyl group on carbon 2 of heme B porphyrin ring with a hydroxyethyl farnesyl side group. This chain is Protoheme IX farnesyltransferase, found in Burkholderia ambifaria (strain ATCC BAA-244 / DSM 16087 / CCUG 44356 / LMG 19182 / AMMD) (Burkholderia cepacia (strain AMMD)).